The primary structure comprises 359 residues: 5-amino-6-(D-ribitylamino)uracil--L-tyrosine 4-hydroxyphenyl transferase (359 aa).

The 238-residue stretch at 45–282 (VTYVVNANIN…VYAISRIFFK (238 aa)) folds into the Radical SAM core domain. C59, C63, and C66 together coordinate [4Fe-4S] cluster.

This sequence belongs to the radical SAM superfamily. CofH family. In terms of assembly, consists of two subunits, CofG and CofH. The cofactor is [4Fe-4S] cluster.

The catalysed reaction is 5-amino-6-(D-ribitylamino)uracil + L-tyrosine + S-adenosyl-L-methionine = 5-amino-5-(4-hydroxybenzyl)-6-(D-ribitylimino)-5,6-dihydrouracil + 2-iminoacetate + 5'-deoxyadenosine + L-methionine + H(+). It functions in the pathway cofactor biosynthesis; coenzyme F0 biosynthesis. Functionally, catalyzes the radical-mediated synthesis of 5-amino-5-(4-hydroxybenzyl)-6-(D-ribitylimino)-5,6-dihydrouracil from 5-amino-6-(D-ribitylamino)uracil and L-tyrosine. The polypeptide is 5-amino-6-(D-ribitylamino)uracil--L-tyrosine 4-hydroxyphenyl transferase (Methanococcus maripaludis (strain C7 / ATCC BAA-1331)).